The chain runs to 62 residues: Large ribosomal subunit protein uL29 (62 aa).

Belongs to the universal ribosomal protein uL29 family.

This is Large ribosomal subunit protein uL29 from Geobacter sp. (strain M21).